A 344-amino-acid polypeptide reads, in one-letter code: Dihydroorotase (344 aa).

Zn(2+) contacts are provided by H13 and H15. Residues 15–17 (HLR) and N41 each bind substrate. Zn(2+)-binding residues include K99, H136, and H174. K99 is subject to N6-carboxylysine. H136 provides a ligand contact to substrate. L219 provides a ligand contact to substrate. Residue D247 participates in Zn(2+) binding. D247 is a catalytic residue. The substrate site is built by H251 and A263.

This sequence belongs to the metallo-dependent hydrolases superfamily. DHOase family. Class II DHOase subfamily. Homodimer. Zn(2+) serves as cofactor.

The enzyme catalyses (S)-dihydroorotate + H2O = N-carbamoyl-L-aspartate + H(+). Its pathway is pyrimidine metabolism; UMP biosynthesis via de novo pathway; (S)-dihydroorotate from bicarbonate: step 3/3. In terms of biological role, catalyzes the reversible cyclization of carbamoyl aspartate to dihydroorotate. This Acinetobacter baumannii (strain AB307-0294) protein is Dihydroorotase.